The primary structure comprises 300 residues: MQTDLSDSSFFNHKSVMTDEILASLEHYPLIHNNQLKGIDATLGGGGHSYHLLRKYSDLHIIGLDQDPFARKSASKKLDEFKNRIDIRAANFADFEPKEKVSFVIADLGVNSNQIDDPKRGFSFQKDGPLDMRMNPFLEVDAEKLIETLQEKDLANLIYKYGDERLSRKIARKIKMDLKVNGKYSGTKELAYSIAGCFPPKQRYKKIHPATRTFQALRIAVNKEIEVLEKFLQIVPDWLLPGGIISIISFHSLEDRLVKSSFKNDQRLKNLTKKPITPSEQEVEINKRARSGKLRVAQLN.

S-adenosyl-L-methionine contacts are provided by residues 46–48 (GGH), aspartate 65, phenylalanine 92, aspartate 107, and glutamine 114.

Belongs to the methyltransferase superfamily. RsmH family.

The protein localises to the cytoplasm. It carries out the reaction cytidine(1402) in 16S rRNA + S-adenosyl-L-methionine = N(4)-methylcytidine(1402) in 16S rRNA + S-adenosyl-L-homocysteine + H(+). Its function is as follows. Specifically methylates the N4 position of cytidine in position 1402 (C1402) of 16S rRNA. This chain is Ribosomal RNA small subunit methyltransferase H, found in Prochlorococcus marinus (strain MIT 9312).